A 231-amino-acid polypeptide reads, in one-letter code: WAP four-disulfide core domain protein 3 (231 aa).

The N-terminal stretch at 1–24 is a signal peptide; that stretch reads MMLSCLFLLKALLALGSLESWITA. 4 WAP domains span residues 26–68, 69–114, 119–162, and 163–207; these read EHAK…CRDI, PKGR…VVPI, LAEF…LGDI, and EGGR…VPPV. 16 cysteine pairs are disulfide-bonded: Cys-33-Cys-57, Cys-40-Cys-61, Cys-44-Cys-56, Cys-50-Cys-65, Cys-76-Cys-102, Cys-85-Cys-106, Cys-89-Cys-101, Cys-95-Cys-110, Cys-126-Cys-150, Cys-133-Cys-154, Cys-137-Cys-149, Cys-143-Cys-158, Cys-170-Cys-195, Cys-178-Cys-199, Cys-182-Cys-194, and Cys-188-Cys-203. N-linked (GlcNAc...) asparagine glycosylation is present at Asn-107. Asn-217 is a glycosylation site (N-linked (GlcNAc...) asparagine).

As to expression, ubiquitously expressed.

The protein localises to the secreted. This chain is WAP four-disulfide core domain protein 3 (WFDC3), found in Homo sapiens (Human).